A 313-amino-acid polypeptide reads, in one-letter code: Nucleotide-binding protein Swit_0399 (313 aa).

Residue 20-27 (GMSGSGKK) participates in ATP binding. 73 to 76 (DSRT) provides a ligand contact to GTP. The disordered stretch occupies residues 289–313 (PTVRHRDLTRQKSNAEESTVPGVGS). Positions 292 to 303 (RHRDLTRQKSNA) are enriched in basic and acidic residues.

It belongs to the RapZ-like family.

Displays ATPase and GTPase activities. This Rhizorhabdus wittichii (strain DSM 6014 / CCUG 31198 / JCM 15750 / NBRC 105917 / EY 4224 / RW1) (Sphingomonas wittichii) protein is Nucleotide-binding protein Swit_0399.